Here is a 389-residue protein sequence, read N- to C-terminus: MSEVTTQSKPERRKRQKLEDMEGYKPSIYGLTRDELIDWAVEHGEKKFRATQIWDWLYKKRVQSFEEMTNISKDFIAKLNDNFCVNPLKQRIVQESKDGTVKYLFELPDGMLIETVLMRQHYGLSVCVTTQVGCNIGCTFCASGLIKKQRDLTAGEIVAQIMLVQKYFDDRGDGERVSHVVVMGIGEPFDNYDNVLRFLRTINNDNGLAIGARHITVSTSGLAPKIKEFANEGVQVNLAVSLHAPNNDLRSSIMRINRSFPLEKLFEAIEYYIQTTNRRVTFEYIMLNEVNDHPENAQELADLTKKIRKLSYINLIPYNPVSEHDHYSRSTKERVATFYDVLKKNGVNCVVRQEHGTDIDAACGQLRSNTMKRDRQKAVAEASGKSEGK.

Glutamate 114 (proton acceptor) is an active-site residue. The region spanning 120–358 (QHYGLSVCVT…CVVRQEHGTD (239 aa)) is the Radical SAM core domain. Cysteine 127 and cysteine 363 are oxidised to a cystine. Cysteine 134, cysteine 138, and cysteine 141 together coordinate [4Fe-4S] cluster. S-adenosyl-L-methionine is bound by residues 186–187 (GE), serine 218, 241–243 (SLH), and asparagine 319. The active-site S-methylcysteine intermediate is cysteine 363. The segment at 370-389 (TMKRDRQKAVAEASGKSEGK) is disordered. Basic and acidic residues predominate over residues 371 to 389 (MKRDRQKAVAEASGKSEGK).

The protein belongs to the radical SAM superfamily. RlmN family. It depends on [4Fe-4S] cluster as a cofactor.

The protein localises to the cytoplasm. The enzyme catalyses adenosine(2503) in 23S rRNA + 2 reduced [2Fe-2S]-[ferredoxin] + 2 S-adenosyl-L-methionine = 2-methyladenosine(2503) in 23S rRNA + 5'-deoxyadenosine + L-methionine + 2 oxidized [2Fe-2S]-[ferredoxin] + S-adenosyl-L-homocysteine. It carries out the reaction adenosine(37) in tRNA + 2 reduced [2Fe-2S]-[ferredoxin] + 2 S-adenosyl-L-methionine = 2-methyladenosine(37) in tRNA + 5'-deoxyadenosine + L-methionine + 2 oxidized [2Fe-2S]-[ferredoxin] + S-adenosyl-L-homocysteine. In terms of biological role, specifically methylates position 2 of adenine 2503 in 23S rRNA and position 2 of adenine 37 in tRNAs. The polypeptide is Probable dual-specificity RNA methyltransferase RlmN (Streptococcus thermophilus (strain ATCC BAA-250 / LMG 18311)).